We begin with the raw amino-acid sequence, 316 residues long: Cation efflux system protein CzcD (316 aa).

A run of 6 helical transmembrane segments spans residues 17 to 37 (LKIA…GGVM), 47 to 67 (AAHM…IAIA), 82 to 102 (FEIL…IYIL), 115 to 135 (IEST…LISM), 152 to 172 (YLEV…AIII), and 174 to 194 (FTGW…WVLP).

It belongs to the cation diffusion facilitator (CDF) transporter (TC 2.A.4) family. SLC30A subfamily.

The protein resides in the cell membrane. Functionally, necessary for activation of the czc determinant. The polypeptide is Cation efflux system protein CzcD (czcD) (Alcaligenes sp. (strain CT14)).